The sequence spans 147 residues: 3-dehydroquinate dehydratase (147 aa).

Tyrosine 23 acts as the Proton acceptor in catalysis. 3 residues coordinate substrate: asparagine 75, histidine 81, and aspartate 88. The Proton donor role is filled by histidine 101. Residues 102–103 (LS) and arginine 112 each bind substrate.

Belongs to the type-II 3-dehydroquinase family. Homododecamer.

The catalysed reaction is 3-dehydroquinate = 3-dehydroshikimate + H2O. It participates in metabolic intermediate biosynthesis; chorismate biosynthesis; chorismate from D-erythrose 4-phosphate and phosphoenolpyruvate: step 3/7. In terms of biological role, catalyzes a trans-dehydration via an enolate intermediate. In Nitrosococcus oceani (strain ATCC 19707 / BCRC 17464 / JCM 30415 / NCIMB 11848 / C-107), this protein is 3-dehydroquinate dehydratase.